The chain runs to 383 residues: MLGKVERSEMYILFAMTQVLLVDKISGITSHTAVAKIRHLTGVKKIGHCGTLDPAACGLLIMGCGTATRLIRYMSNLDKRYIATITLGTQTTTDDSEGEIIYSAPKPSLDKITLESIGRAAEKLSGTIKQIPSAYSAIKVSGNRAYNLARQGIIPKLNAREVRVHWKFLGDFENNQVHVQITCSSGTYVRALARDMGKFLGVGGHLSYLKRLSIGPFHLHEIYREINKKEATMSERTPSGNTQGLTDNMAISDNMAISESDKHDCTEPGINCTELGIKDTCTALREVHYTQGDTLSFTRLTALQALSRIYKPIEVSQKQADDLSCGRYISLGIDSNGPVCAVCKENLIAVIQPVSAGLWRPETVLSDNRKLNSNAAQDASGST.

Asp53 serves as the catalytic Nucleophile.

Belongs to the pseudouridine synthase TruB family. Type 1 subfamily.

It catalyses the reaction uridine(55) in tRNA = pseudouridine(55) in tRNA. Functionally, responsible for synthesis of pseudouridine from uracil-55 in the psi GC loop of transfer RNAs. The protein is tRNA pseudouridine synthase B of Tropheryma whipplei (strain TW08/27) (Whipple's bacillus).